The primary structure comprises 304 residues: Putative dihydroorotate dehydrogenase A (fumarate) (304 aa).

FMN-binding positions include Ser-21 and Lys-45–Ser-46. Residues Lys-45, Asn-69–Leu-73, and Asn-129 contribute to the substrate site. Asn-129 contacts FMN. The Nucleophile role is filled by Cys-132. 2 residues coordinate FMN: Lys-168 and Ile-194. Position 195 to 196 (Asn-195 to Thr-196) interacts with substrate. Residues Gly-220, Gly-246–Gly-247, and Gly-268–Ser-269 contribute to the FMN site.

This sequence belongs to the dihydroorotate dehydrogenase family. Type 1 subfamily. In terms of assembly, homodimer. The cofactor is FMN.

The protein localises to the cytoplasm. The catalysed reaction is (S)-dihydroorotate + fumarate = orotate + succinate. The protein operates within pyrimidine metabolism; UMP biosynthesis via de novo pathway. Functionally, catalyzes the conversion of dihydroorotate to orotate with fumarate as the electron acceptor. This Pediococcus pentosaceus (strain ATCC 25745 / CCUG 21536 / LMG 10740 / 183-1w) protein is Putative dihydroorotate dehydrogenase A (fumarate) (pyrD).